Consider the following 347-residue polypeptide: NADH-ubiquinone oxidoreductase chain 2 (347 aa).

11 consecutive transmembrane segments (helical) span residues 3–23 (PPIF…VMTS), 25–45 (HWML…PILM), 59–79 (YFLT…INLL), 96–116 (ILMT…FWVP), 122–142 (IPLS…LSVL), 149–169 (INPN…GWGG), 178–198 (ILAY…LYNP), 201–221 (MILN…LFML), 237–257 (MPLI…LPPL), 274–294 (EMII…YFYM), and 325–345 (FLPP…MISI).

Belongs to the complex I subunit 2 family. In terms of assembly, core subunit of respiratory chain NADH dehydrogenase (Complex I) which is composed of 45 different subunits. Interacts with TMEM242.

The protein resides in the mitochondrion inner membrane. It carries out the reaction a ubiquinone + NADH + 5 H(+)(in) = a ubiquinol + NAD(+) + 4 H(+)(out). Core subunit of the mitochondrial membrane respiratory chain NADH dehydrogenase (Complex I) which catalyzes electron transfer from NADH through the respiratory chain, using ubiquinone as an electron acceptor. Essential for the catalytic activity and assembly of complex I. This chain is NADH-ubiquinone oxidoreductase chain 2, found in Genetta servalina (Servaline genet).